A 426-amino-acid polypeptide reads, in one-letter code: D-tagatose-1,6-bisphosphate aldolase subunit KbaZ (426 aa).

The protein belongs to the GatZ/KbaZ family. KbaZ subfamily. Forms a complex with KbaY.

It participates in carbohydrate metabolism; D-tagatose 6-phosphate degradation; D-glyceraldehyde 3-phosphate and glycerone phosphate from D-tagatose 6-phosphate: step 2/2. Functionally, component of the tagatose-1,6-bisphosphate aldolase KbaYZ that is required for full activity and stability of the Y subunit. Could have a chaperone-like function for the proper and stable folding of KbaY. When expressed alone, KbaZ does not show any aldolase activity. In Escherichia coli O127:H6 (strain E2348/69 / EPEC), this protein is D-tagatose-1,6-bisphosphate aldolase subunit KbaZ.